The following is a 338-amino-acid chain: Flap endonuclease 1 (338 aa).

The N-domain stretch occupies residues 1-98 (MGTDIGDLLQ…ETLNRRKEVR (98 aa)). Residues aspartate 27, aspartate 80, glutamate 152, glutamate 154, aspartate 173, aspartate 175, and aspartate 236 each contribute to the Mg(2+) site. Positions 116–257 (AAYKYAQASS…TALKLIKKHG (142 aa)) are I-domain. An interaction with PCNA region spans residues 330–338 (RQQTLDQWF).

This sequence belongs to the XPG/RAD2 endonuclease family. FEN1 subfamily. Interacts with PCNA. PCNA stimulates the nuclease activity without altering cleavage specificity. Requires Mg(2+) as cofactor.

Functionally, structure-specific nuclease with 5'-flap endonuclease and 5'-3' exonuclease activities involved in DNA replication and repair. During DNA replication, cleaves the 5'-overhanging flap structure that is generated by displacement synthesis when DNA polymerase encounters the 5'-end of a downstream Okazaki fragment. Binds the unpaired 3'-DNA end and kinks the DNA to facilitate 5' cleavage specificity. Cleaves one nucleotide into the double-stranded DNA from the junction in flap DNA, leaving a nick for ligation. Also involved in the base excision repair (BER) pathway. Acts as a genome stabilization factor that prevents flaps from equilibrating into structures that lead to duplications and deletions. Also possesses 5'-3' exonuclease activity on nicked or gapped double-stranded DNA. This Methanosarcina barkeri (strain Fusaro / DSM 804) protein is Flap endonuclease 1.